A 325-amino-acid chain; its full sequence is Probable cell division protein WhiA (325 aa).

The segment at residues 273 to 306 is a DNA-binding region (H-T-H motif); that stretch reads SLEELGALADPPLTKDAVAGRIRRLLALADKRAN.

Belongs to the WhiA family.

In terms of biological role, involved in cell division and chromosome segregation. This Parafrankia sp. (strain EAN1pec) protein is Probable cell division protein WhiA.